The sequence spans 417 residues: Secernin-3 (417 aa).

The propeptide occupies 1 to 5; sequence MYPRS. Cys-6 is a catalytic residue. Cys-6 carries the glyoxylic acid (Cys); alternate modification. Residue Cys-6 is modified to Pyruvic acid (Cys); alternate.

This sequence belongs to the peptidase C69 family. Secernin subfamily.

In terms of biological role, plays a role in thermal nociception. In Danio rerio (Zebrafish), this protein is Secernin-3 (scrn3).